We begin with the raw amino-acid sequence, 172 residues long: Type IV secretion system putative outer membrane lipoprotein BMEII0036 (172 aa).

An N-terminal signal peptide occupies residues 1–15; that stretch reads MRTLVMVACAVSLAA. Residue Cys16 is the site of N-palmitoyl cysteine attachment. The S-diacylglycerol cysteine moiety is linked to residue Cys16. One can recognise an OmpA-like domain in the interval 58–172; it reads WPARPPKQTV…RRVDIEILRK (115 aa).

It localises to the cell outer membrane. The chain is Type IV secretion system putative outer membrane lipoprotein BMEII0036 from Brucella melitensis biotype 1 (strain ATCC 23456 / CCUG 17765 / NCTC 10094 / 16M).